A 345-amino-acid polypeptide reads, in one-letter code: Myb/SANT-like DNA-binding domain-containing protein 4 (345 aa).

One can recognise a Myb-like domain in the interval 4–77 (LKRKRKSNFS…EVKRRYLDWR (74 aa)). Lys-9 participates in a covalent cross-link: Glycyl lysine isopeptide (Lys-Gly) (interchain with G-Cter in SUMO2). Residue Ser-106 is modified to Phosphoserine. Residues Lys-114 and Lys-142 each participate in a glycyl lysine isopeptide (Lys-Gly) (interchain with G-Cter in SUMO2) cross-link. The tract at residues 141–160 (VKVEEEERDPQSPEFEIEEE) is disordered. Thr-188 carries the post-translational modification Phosphothreonine. Residues 203–345 (LLVNIEKQKL…LRIQKEGHLQ (143 aa)) adopt a coiled-coil conformation. Glycyl lysine isopeptide (Lys-Gly) (interchain with G-Cter in SUMO2) cross-links involve residues Lys-237, Lys-254, and Lys-273.

In Bos taurus (Bovine), this protein is Myb/SANT-like DNA-binding domain-containing protein 4 (MSANTD4).